The primary structure comprises 296 residues: Diaminopimelate epimerase (296 aa).

Asparagine 17, glutamine 49, and asparagine 69 together coordinate substrate. The Proton donor role is filled by cysteine 78. Substrate-binding positions include 79–80 (GN), asparagine 171, asparagine 205, and 223–224 (ER). Residue cysteine 232 is the Proton acceptor of the active site. Substrate is bound at residue 233-234 (GT).

The protein belongs to the diaminopimelate epimerase family. In terms of assembly, homodimer.

It is found in the cytoplasm. The enzyme catalyses (2S,6S)-2,6-diaminopimelate = meso-2,6-diaminopimelate. The protein operates within amino-acid biosynthesis; L-lysine biosynthesis via DAP pathway; DL-2,6-diaminopimelate from LL-2,6-diaminopimelate: step 1/1. Functionally, catalyzes the stereoinversion of LL-2,6-diaminopimelate (L,L-DAP) to meso-diaminopimelate (meso-DAP), a precursor of L-lysine and an essential component of the bacterial peptidoglycan. This chain is Diaminopimelate epimerase, found in Methylorubrum extorquens (strain CM4 / NCIMB 13688) (Methylobacterium extorquens).